A 188-amino-acid polypeptide reads, in one-letter code: Large ribosomal subunit protein uL10 (188 aa).

This sequence belongs to the universal ribosomal protein uL10 family. As to quaternary structure, part of the ribosomal stalk of the 50S ribosomal subunit. The N-terminus interacts with L11 and the large rRNA to form the base of the stalk. The C-terminus forms an elongated spine to which L12 dimers bind in a sequential fashion forming a multimeric L10(L12)X complex.

Its function is as follows. Forms part of the ribosomal stalk, playing a central role in the interaction of the ribosome with GTP-bound translation factors. This is Large ribosomal subunit protein uL10 from Crocosphaera subtropica (strain ATCC 51142 / BH68) (Cyanothece sp. (strain ATCC 51142)).